The sequence spans 193 residues: Ion-translocating oxidoreductase complex subunit A (193 aa).

6 helical membrane passes run 4–24, 39–59, 72–92, 102–122, 134–154, and 171–191; these read LLLILIGAVLVNNFVLARFLG, LGMGMAVTFVMVVASGCTWVL, LQTIAFILVIATLVQMVEMIV, SLGIFLPLITTNCAVLGLAVL, LVFAFGGAVGFTLALVLFAGL, and PIELITAGLLALAFMGFAGLV.

This sequence belongs to the NqrDE/RnfAE family. In terms of assembly, the complex is composed of six subunits: RnfA, RnfB, RnfC, RnfD, RnfE and RnfG.

It localises to the cell inner membrane. Functionally, part of a membrane-bound complex that couples electron transfer with translocation of ions across the membrane. This is Ion-translocating oxidoreductase complex subunit A from Syntrophotalea carbinolica (strain DSM 2380 / NBRC 103641 / GraBd1) (Pelobacter carbinolicus).